A 594-amino-acid chain; its full sequence is Aspartate--tRNA(Asp/Asn) ligase (594 aa).

L-aspartate is bound at residue glutamate 175. Positions 199–202 are aspartate; it reads QIYK. 2 residues coordinate L-aspartate: arginine 221 and histidine 454. An ATP-binding site is contributed by 221-223; the sequence is RDE. ATP is bound at residue glutamate 488. Arginine 495 serves as a coordination point for L-aspartate. 540 to 543 serves as a coordination point for ATP; it reads GIDR.

It belongs to the class-II aminoacyl-tRNA synthetase family. Type 1 subfamily. In terms of assembly, homodimer.

It localises to the cytoplasm. The catalysed reaction is tRNA(Asx) + L-aspartate + ATP = L-aspartyl-tRNA(Asx) + AMP + diphosphate. Aspartyl-tRNA synthetase with relaxed tRNA specificity since it is able to aspartylate not only its cognate tRNA(Asp) but also tRNA(Asn). Reaction proceeds in two steps: L-aspartate is first activated by ATP to form Asp-AMP and then transferred to the acceptor end of tRNA(Asp/Asn). In Chelativorans sp. (strain BNC1), this protein is Aspartate--tRNA(Asp/Asn) ligase.